Consider the following 485-residue polypeptide: GTPase Der (485 aa).

2 consecutive EngA-type G domains span residues 3–167 (PTIA…PEPE) and 176–349 (PVFA…NAAM). Residues 9 to 16 (GRPNVGKS), 56 to 60 (DTGGF), 119 to 122 (NKGE), 182 to 189 (GRPNVGKS), 229 to 233 (DTAGV), and 294 to 297 (NKWD) contribute to the GTP site. The KH-like domain maps to 350 to 434 (IKMPTPKITR…PLRIQYNVSE (85 aa)). Residues 435–485 (NPYENAEDKPKKKPLRRVSLSNRIEKREGRKEEKNRFKKKTKVSVKKQFSK) are disordered. Positions 457–469 (RIEKREGRKEEKN) are enriched in basic and acidic residues. Basic residues predominate over residues 470 to 485 (RFKKKTKVSVKKQFSK).

It belongs to the TRAFAC class TrmE-Era-EngA-EngB-Septin-like GTPase superfamily. EngA (Der) GTPase family. As to quaternary structure, associates with the 50S ribosomal subunit.

In terms of biological role, GTPase that plays an essential role in the late steps of ribosome biogenesis. This chain is GTPase Der, found in Neisseria meningitidis serogroup B (strain ATCC BAA-335 / MC58).